Here is a 441-residue protein sequence, read N- to C-terminus: Arginine biosynthesis bifunctional protein ArgJ, mitochondrial (441 aa).

A mitochondrion-targeting transit peptide spans 1–8; the sequence is MRISSTLL. 6 residues coordinate substrate: threonine 177, lysine 204, threonine 215, glutamate 301, asparagine 436, and serine 441. The Nucleophile role is filled by threonine 215.

The protein belongs to the ArgJ family. In terms of assembly, heterodimer of an alpha and a beta chain. In terms of processing, the alpha and beta chains are autoproteolytically processed from a single precursor protein within the mitochondrion.

Its subcellular location is the mitochondrion matrix. The enzyme catalyses N(2)-acetyl-L-ornithine + L-glutamate = N-acetyl-L-glutamate + L-ornithine. The catalysed reaction is L-glutamate + acetyl-CoA = N-acetyl-L-glutamate + CoA + H(+). Its pathway is amino-acid biosynthesis; L-arginine biosynthesis; L-ornithine and N-acetyl-L-glutamate from L-glutamate and N(2)-acetyl-L-ornithine (cyclic): step 1/1. The protein operates within amino-acid biosynthesis; L-arginine biosynthesis; N(2)-acetyl-L-ornithine from L-glutamate: step 1/4. Catalyzes two activities which are involved in the cyclic version of arginine biosynthesis: the synthesis of acetylglutamate from glutamate and acetyl-CoA, and of ornithine by transacetylation between acetylornithine and glutamate. The sequence is that of Arginine biosynthesis bifunctional protein ArgJ, mitochondrial from Saccharomyces cerevisiae (strain Lalvin EC1118 / Prise de mousse) (Baker's yeast).